A 580-amino-acid polypeptide reads, in one-letter code: Cytochrome c oxidase subunit 1 (580 aa).

The interval 1-25 (MTAVAPRVDGHVAPQRPEPTGHARK) is disordered. Residues 43–63 (IMYIIMSFSFFFLGGLMALLI) traverse the membrane as a helical segment. Position 87 (His87) interacts with Fe(II)-heme a. A run of 6 helical transmembrane segments spans residues 90–110 (VMLLLYGTPIVWGFANYVLPL), 122–142 (LNAFGFWITTVGGVAMLAGFL), 171–191 (MWIIGVGATGIGSVASAINML), 214–234 (IFVTSVLALLIFPLLLAAALG), 259–279 (LFWFFGHPEVYVLALPFFGII), and 292–312 (FGYIGLVFATLSIGALSMAVW). The Cu cation site is built by His265 and Tyr269. Positions 265-269 (HPEVY) form a cross-link, 1'-histidyl-3'-tyrosine (His-Tyr). Positions 314 and 315 each coordinate Cu cation. The next 2 helical transmembrane spans lie at 316–336 (MFVTGAVLLPFFSFMTFLISV) and 360–380 (MIWAVGFMSTFLFGGLTGIML). Residue His398 coordinates heme a3. The next 3 membrane-spanning stretches (helical) occupy residues 399 to 419 (FHYTLFGTVVFASCAGVYFWF), 434 to 454 (IHFWLTFVGFHGTFMVQHWLG), and 477 to 497 (ISTIFSFLLGLSVIPFVWNVF). His400 serves as a coordination point for Fe(II)-heme a.

The protein belongs to the heme-copper respiratory oxidase family. In terms of assembly, associates with subunits II, III and IV to form cytochrome c oxidase. The cofactor is Cu(2+). Heme serves as cofactor.

Its subcellular location is the cell membrane. It catalyses the reaction 4 Fe(II)-[cytochrome c] + O2 + 8 H(+)(in) = 4 Fe(III)-[cytochrome c] + 2 H2O + 4 H(+)(out). The protein operates within energy metabolism; oxidative phosphorylation. Its function is as follows. Cytochrome c oxidase is the component of the respiratory chain that catalyzes the reduction of oxygen to water. Subunits 1-3 form the functional core of the enzyme complex. CO I is the catalytic subunit of the enzyme. Electrons originating in cytochrome c are transferred via the copper A center of subunit 2 and heme A of subunit 1 to the bimetallic center formed by heme A3 and copper B. In Corynebacterium efficiens (strain DSM 44549 / YS-314 / AJ 12310 / JCM 11189 / NBRC 100395), this protein is Cytochrome c oxidase subunit 1 (ctaD).